The sequence spans 791 residues: Organellar oligopeptidase A, chloroplastic/mitochondrial (791 aa).

A chloroplast and mitochondrion-targeting transit peptide spans 1–82; that stretch reads MLMATPTSRA…SSPPSMSSAA (82 aa). Coiled-coil stretches lie at residues 118–138 and 239–259; these read RPGI…LEKS and DDEK…LSHK. Zn(2+) is bound at residue histidine 571. Residue glutamate 572 is part of the active site. Zn(2+) contacts are provided by histidine 575 and glutamate 601. 703-709 lines the substrate pocket; that stretch reads HIFAGGY.

This sequence belongs to the peptidase M3 family. Requires Zn(2+) as cofactor.

The protein resides in the mitochondrion matrix. It is found in the plastid. The protein localises to the chloroplast stroma. The catalysed reaction is Hydrolysis of oligopeptides, with broad specificity. Gly or Ala commonly occur as P1 or P1' residues, but more distant residues are also important, as is shown by the fact that Z-Gly-Pro-Gly-|-Gly-Pro-Ala is cleaved, but not Z-(Gly)(5).. Inhibited by salicylic acid. Oligopeptidase degrading short peptides from 8 to 23 amino acid residues. Plays a role in the degradation of transit peptides and of peptides derived from other proteolytic events. Does not exhibit a strict cleavage pattern. Binds salicylic acid. The protein is Organellar oligopeptidase A, chloroplastic/mitochondrial of Arabidopsis thaliana (Mouse-ear cress).